A 983-amino-acid chain; its full sequence is Bifunctional glutamine synthetase adenylyltransferase/adenylyl-removing enzyme (983 aa).

The tract at residues 1 to 490 (MDRKSSVTID…AHGQVFYSPV (490 aa)) is adenylyl removase. Positions 496 to 983 (RIPTQDLRMS…RVVDAVFWNQ (488 aa)) are adenylyl transferase.

It belongs to the GlnE family. The cofactor is Mg(2+).

It carries out the reaction [glutamine synthetase]-O(4)-(5'-adenylyl)-L-tyrosine + phosphate = [glutamine synthetase]-L-tyrosine + ADP. The catalysed reaction is [glutamine synthetase]-L-tyrosine + ATP = [glutamine synthetase]-O(4)-(5'-adenylyl)-L-tyrosine + diphosphate. Functionally, involved in the regulation of glutamine synthetase GlnA, a key enzyme in the process to assimilate ammonia. When cellular nitrogen levels are high, the C-terminal adenylyl transferase (AT) inactivates GlnA by covalent transfer of an adenylyl group from ATP to specific tyrosine residue of GlnA, thus reducing its activity. Conversely, when nitrogen levels are low, the N-terminal adenylyl removase (AR) activates GlnA by removing the adenylyl group by phosphorolysis, increasing its activity. The regulatory region of GlnE binds the signal transduction protein PII (GlnB) which indicates the nitrogen status of the cell. In Cutibacterium acnes (strain DSM 16379 / KPA171202) (Propionibacterium acnes), this protein is Bifunctional glutamine synthetase adenylyltransferase/adenylyl-removing enzyme.